Here is a 200-residue protein sequence, read N- to C-terminus: Glycerol-3-phosphate acyltransferase (200 aa).

Helical transmembrane passes span 1–21, 84–104, 116–136, and 159–179; these read MITVVLIFSAYLLGSISFAVV, VIAGAALAVFLGHLFPIFLAF, ILLGLNPWLGVLTISTWMVVA, and FLLEKGILIMAVSIISVLLIL.

This sequence belongs to the PlsY family. As to quaternary structure, probably interacts with PlsX.

The protein localises to the cell inner membrane. It carries out the reaction an acyl phosphate + sn-glycerol 3-phosphate = a 1-acyl-sn-glycero-3-phosphate + phosphate. Its pathway is lipid metabolism; phospholipid metabolism. Its function is as follows. Catalyzes the transfer of an acyl group from acyl-phosphate (acyl-PO(4)) to glycerol-3-phosphate (G3P) to form lysophosphatidic acid (LPA). This enzyme utilizes acyl-phosphate as fatty acyl donor, but not acyl-CoA or acyl-ACP. The chain is Glycerol-3-phosphate acyltransferase from Nitrosomonas europaea (strain ATCC 19718 / CIP 103999 / KCTC 2705 / NBRC 14298).